Reading from the N-terminus, the 448-residue chain is Cysteine--tRNA ligase (448 aa).

Residue C27 participates in Zn(2+) binding. Positions 29 to 39 match the 'HIGH' region motif; that stretch reads PTVYNYIHVGN. Zn(2+)-binding residues include C210, H235, and E239. A 'KMSKS' region motif is present at residues 267 to 271; it reads KMSKS. Residue K270 coordinates ATP.

Belongs to the class-I aminoacyl-tRNA synthetase family. In terms of assembly, monomer. It depends on Zn(2+) as a cofactor.

Its subcellular location is the cytoplasm. The catalysed reaction is tRNA(Cys) + L-cysteine + ATP = L-cysteinyl-tRNA(Cys) + AMP + diphosphate. The sequence is that of Cysteine--tRNA ligase from Lactococcus lactis subsp. cremoris (strain SK11).